The chain runs to 373 residues: Flagellar P-ring protein 1 (373 aa).

The signal sequence occupies residues 1–24; that stretch reads MRGISRLYWSLVLICFAFAPIVEA.

It belongs to the FlgI family. The basal body constitutes a major portion of the flagellar organelle and consists of four rings (L,P,S, and M) mounted on a central rod.

Its subcellular location is the periplasm. The protein localises to the bacterial flagellum basal body. Functionally, assembles around the rod to form the L-ring and probably protects the motor/basal body from shearing forces during rotation. This is Flagellar P-ring protein 1 from Hahella chejuensis (strain KCTC 2396).